The following is a 193-amino-acid chain: Rho-related GTP-binding protein RhoA-C (193 aa).

GTP-binding positions include 12-19 (GDGACGKT), 30-37 (FPEVYVPT), 59-63 (DTAGQ), 117-120 (NKKD), and 160-162 (SAK). (Microbial infection) O-linked (GlcNAc) tyrosine; by Yersinia Afp18 glycosylation occurs at Y34. C190 carries the cysteine methyl ester modification. A lipid anchor (S-geranylgeranyl cysteine) is attached at C190. Residues 191 to 193 (LLL) constitute a propeptide, removed in mature form.

The protein belongs to the small GTPase superfamily. Rho family. (Microbial infection) Glycosylated at Tyr-34 by Yersinia ruckeri toxin Afp18. Mono-O-GlcNAcylation by Afp18 inhibits RhoA activation by guanine nucleotide exchange factors and blocks RhoA signaling.

It is found in the cell membrane. Functionally, regulates a signal transduction pathway linking plasma membrane receptors to the assembly of focal adhesions and actin stress fibers. In Danio rerio (Zebrafish), this protein is Rho-related GTP-binding protein RhoA-C.